A 102-amino-acid polypeptide reads, in one-letter code: Small ribosomal subunit protein uS10 (102 aa).

It belongs to the universal ribosomal protein uS10 family. As to quaternary structure, part of the 30S ribosomal subunit.

Functionally, involved in the binding of tRNA to the ribosomes. This is Small ribosomal subunit protein uS10 from Thermosipho melanesiensis (strain DSM 12029 / CIP 104789 / BI429).